The sequence spans 276 residues: Acyl-[acyl-carrier-protein]--UDP-N-acetylglucosamine O-acyltransferase (276 aa).

Belongs to the transferase hexapeptide repeat family. LpxA subfamily. In terms of assembly, homotrimer.

It localises to the cytoplasm. The catalysed reaction is a (3R)-hydroxyacyl-[ACP] + UDP-N-acetyl-alpha-D-glucosamine = a UDP-3-O-[(3R)-3-hydroxyacyl]-N-acetyl-alpha-D-glucosamine + holo-[ACP]. It functions in the pathway glycolipid biosynthesis; lipid IV(A) biosynthesis; lipid IV(A) from (3R)-3-hydroxytetradecanoyl-[acyl-carrier-protein] and UDP-N-acetyl-alpha-D-glucosamine: step 1/6. In terms of biological role, involved in the biosynthesis of lipid A, a phosphorylated glycolipid that anchors the lipopolysaccharide to the outer membrane of the cell. The polypeptide is Acyl-[acyl-carrier-protein]--UDP-N-acetylglucosamine O-acyltransferase (Gloeothece citriformis (strain PCC 7424) (Cyanothece sp. (strain PCC 7424))).